A 534-amino-acid chain; its full sequence is CAP-Gly domain-containing linker protein 3 (534 aa).

Residues 1-16 (MTREDLPDSTPEESKL) are compositionally biased toward basic and acidic residues. The interval 1–33 (MTREDLPDSTPEESKLPMEFQSPLLEKRRRPVV) is disordered. ANK repeat units lie at residues 107 to 148 (TDMT…LRSR), 150 to 173 (TNMN…LLKA), and 187 to 299 (NHGT…KAGT). A CAP-Gly 1 domain is found at 304 to 346 (GTTEFASGQWVGVELDEPDGKNDGSVGGIRYFICPPKQGIFAP). The disordered stretch occupies residues 349 to 391 (KISKAPDQPPSSVTSTPRTPRVDFSRVTGKGRKEKKATHKKSL). The span at 358–367 (PSSVTSTPRT) shows a compositional bias: low complexity. Residues 377–390 (GKGRKEKKATHKKS) show a composition bias toward basic residues. One can recognise a CAP-Gly 2 domain in the interval 423 to 465 (GKTDFAPGYWFGIELEKPTGKHDGSVFGVRYFTCSAKNGVFAP). A goLD region spans residues 475-534 (PKDPQTDNNDMKKVHQVTMTQPKRNFTKVRTPKEIASENSMSRILFCCWFPWLLRAEMKS).

As to quaternary structure, homodimer.

Its subcellular location is the cytoplasm. It localises to the golgi apparatus. The protein localises to the golgi stack. Functionally, functions as a cytoplasmic linker protein. Involved in TGN-endosome dynamics. The sequence is that of CAP-Gly domain-containing linker protein 3 (clip3) from Xenopus laevis (African clawed frog).